Consider the following 244-residue polypeptide: Transcriptional regulatory protein AruR (244 aa).

The region spanning 6–124 (RVLVVDDDPV…ELVSRAKNLI (119 aa)) is the Response regulatory domain. At Asp-60 the chain carries 4-aspartylphosphate. The segment at residues 139 to 239 (QALRQFGDWL…IHGAGYLFTA (101 aa)) is a DNA-binding region (ompR/PhoB-type).

Phosphorylated by AruS.

It localises to the cytoplasm. Its pathway is amino-acid degradation; L-arginine degradation [regulation]. Its function is as follows. Member of the two-component regulatory system AruS/AruR, which is involved in the regulation of the arginine transaminase (ATA) pathway in response to exogeneous L-arginine. Regulates transcription of aruH and aruI. The sequence is that of Transcriptional regulatory protein AruR (aruR) from Pseudomonas aeruginosa (strain ATCC 15692 / DSM 22644 / CIP 104116 / JCM 14847 / LMG 12228 / 1C / PRS 101 / PAO1).